The chain runs to 49 residues: Defensin-like protein 1 (49 aa).

Disulfide bonds link cysteine 3-cysteine 49, cysteine 14-cysteine 35, cysteine 20-cysteine 43, and cysteine 24-cysteine 45.

Belongs to the DEFL family.

It localises to the secreted. Possesses antimicrobial activity sensitive to inorganic cations. Binds specifically to the fungal plasma membrane. Has no inhibitory effect on insect gut alpha-amylase. This Clitoria ternatea (Butterfly pea) protein is Defensin-like protein 1.